Consider the following 327-residue polypeptide: Aldo/keto reductase slr0942 (327 aa).

Position 18 to 27 (Gly-18 to Gly-27) interacts with NADP(+). The active-site Proton donor is Tyr-57. His-119 is a substrate binding site. Ser-216–Asn-280 provides a ligand contact to NADP(+).

Belongs to the aldo/keto reductase family. Monomer.

It catalyses the reaction a secondary alcohol + NADP(+) = a ketone + NADPH + H(+). With respect to regulation, curcumin non-competitively inhibits the enzyme with respect to furfural. To a lesser extent, enzyme activity is also inhibited by indomethacin, coumarate, coumarin, and alrestatin. Functionally, aldo/keto reductase with broad substrate spectrum. Catalyzes the NADPH-dependent reduction of aldehyde- and ketone-groups of different classes of carbonyl compounds to the corresponding alcohols. Highest enzymatic efficiency is observed with 4-oxonon-2-enal (4-ONE) and 4-hydroxynon-2-enal (4-HNE), that are lipid peroxidation products, and 9,10-phenanthrenequinone (9,10-PQ), a photoproduct of phenanthrene that is one of the most prevalent polycyclic aromatic hydrocarbons in the environment. Is also active on sugar-derived reactive carbonyls such as methylglyoxal (MG), glyoxal and 3-deoxyglucosone (3-DG), and on other lipid-derived carbonyls such as acrolein. May be involved in the detoxification of the toxic lipid peroxidation products 4-ONE and 4-HNE besides many other exo- and endogenic reactive carbonyl compounds (RCs) that may lead to photoinhibition or other cell damages. The chain is Aldo/keto reductase slr0942 from Synechocystis sp. (strain ATCC 27184 / PCC 6803 / Kazusa).